Reading from the N-terminus, the 1475-residue chain is Alpha-glucan water dikinase, chloroplastic (1475 aa).

A chloroplast-targeting transit peptide spans 1–85 (MSNSIGRNVL…HRPVLITPRA (85 aa)). The active-site Tele-phosphohistidine intermediate is the His-1077.

The protein belongs to the PEP-utilizing enzyme family. As to quaternary structure, homodimer. Requires Mg(2+) as cofactor.

The protein resides in the plastid. It localises to the chloroplast. It catalyses the reaction [(1-&gt;4)-alpha-D-glucosyl](n) + n ATP + n H2O = [(1-&gt;4)-6-phospho-alpha-D-glucosyl](n) + n AMP + n phosphate + 2n H(+). In terms of biological role, mediates the incorporation of phosphate into starch-like alpha-glucan, mostly at the C-6 position of glucose units. Acts as an overall regulator of starch mobilization. Required for starch degradation, suggesting that the phosphate content of starch regulates its degradability. The protein is Alpha-glucan water dikinase, chloroplastic (R1) of Citrus reticulata (Tangerine).